The following is a 95-amino-acid chain: uncharacterized protein (95 aa).

A signal peptide (or 21) is located at residues 1–24 (MKKLATLTALAGALTMAVATAAQA). Over residues 55–89 (EGKCGADKAKSAEGKCGEGKCGADKAKSAEGKCGE) the composition is skewed to basic and acidic residues. The interval 55–95 (EGKCGADKAKSAEGKCGEGKCGADKAKSAEGKCGEGKCGSK) is disordered.

This is an uncharacterized protein from Haemophilus influenzae (strain ATCC 51907 / DSM 11121 / KW20 / Rd).